Here is a 377-residue protein sequence, read N- to C-terminus: Succinyl-diaminopimelate desuccinylase (377 aa).

His67 serves as a coordination point for Zn(2+). Asp69 is an active-site residue. A Zn(2+)-binding site is contributed by Asp100. The active-site Proton acceptor is Glu134. Glu135, Glu163, and His349 together coordinate Zn(2+).

This sequence belongs to the peptidase M20A family. DapE subfamily. As to quaternary structure, homodimer. Zn(2+) is required as a cofactor. Requires Co(2+) as cofactor.

It catalyses the reaction N-succinyl-(2S,6S)-2,6-diaminopimelate + H2O = (2S,6S)-2,6-diaminopimelate + succinate. It participates in amino-acid biosynthesis; L-lysine biosynthesis via DAP pathway; LL-2,6-diaminopimelate from (S)-tetrahydrodipicolinate (succinylase route): step 3/3. Functionally, catalyzes the hydrolysis of N-succinyl-L,L-diaminopimelic acid (SDAP), forming succinate and LL-2,6-diaminopimelate (DAP), an intermediate involved in the bacterial biosynthesis of lysine and meso-diaminopimelic acid, an essential component of bacterial cell walls. This Mannheimia succiniciproducens (strain KCTC 0769BP / MBEL55E) protein is Succinyl-diaminopimelate desuccinylase.